A 129-amino-acid polypeptide reads, in one-letter code: uncharacterized protein (129 aa).

The segment at 52–94 is disordered; it reads NGDEESQDDWLNDLLKSDGDGGKAGPVDPSHPMETTTTDHSSQ. The span at 53 to 62 shows a compositional bias: acidic residues; that stretch reads GDEESQDDWL. Residues 84–94 show a composition bias toward polar residues; the sequence is METTTTDHSSQ.

This is an uncharacterized protein from Caenorhabditis elegans.